The sequence spans 586 residues: NudC domain-containing protein 1 (586 aa).

In terms of domain architecture, CS spans 275–364 (KREPLYNWQQ…EPGCTWAELV (90 aa)).

It is found in the cytoplasm. It localises to the nucleus. This chain is NudC domain-containing protein 1, found in Xenopus laevis (African clawed frog).